Reading from the N-terminus, the 32-residue chain is Photosystem II reaction center protein T (32 aa).

A helical transmembrane segment spans residues 3–23 (ALVYTFLLIGTLVVIFFAIFF).

This sequence belongs to the PsbT family. In terms of assembly, PSII is composed of 1 copy each of membrane proteins PsbA, PsbB, PsbC, PsbD, PsbE, PsbF, PsbH, PsbI, PsbJ, PsbK, PsbL, PsbM, PsbT, PsbX, PsbY, PsbZ, Psb30/Ycf12, at least 3 peripheral proteins of the oxygen-evolving complex and a large number of cofactors. It forms dimeric complexes.

The protein resides in the plastid. It localises to the chloroplast thylakoid membrane. In terms of biological role, found at the monomer-monomer interface of the photosystem II (PS II) dimer, plays a role in assembly and dimerization of PSII. PSII is a light-driven water plastoquinone oxidoreductase, using light energy to abstract electrons from H(2)O, generating a proton gradient subsequently used for ATP formation. This chain is Photosystem II reaction center protein T, found in Emiliania huxleyi (Coccolithophore).